The following is a 256-amino-acid chain: Probable cyclic nucleotide phosphodiesterase Fisuc_1441/FSU_1912 (256 aa).

7 residues coordinate Fe cation: Asp20, His22, Asp59, Asn89, His156, His196, and His198. Residues His22, Asp59, and 89–90 each bind AMP; that span reads NH. His198 serves as a coordination point for AMP.

It belongs to the cyclic nucleotide phosphodiesterase class-III family. Fe(2+) serves as cofactor.

The protein is Probable cyclic nucleotide phosphodiesterase Fisuc_1441/FSU_1912 of Fibrobacter succinogenes (strain ATCC 19169 / S85).